The chain runs to 201 residues: Probable phosphopantothenoylcysteine decarboxylase (201 aa).

Residues 20 to 22, 45 to 47, 98 to 101, and Ala132 each bind FMN; these read GSV, SKS, and SANT. Residues Asn134 and 164 to 166 each bind substrate; that span reads KLA. Cys167 functions as the Proton donor in the catalytic mechanism. Residue Met175 participates in substrate binding.

It belongs to the HFCD (homooligomeric flavin containing Cys decarboxylase) superfamily. In terms of assembly, homotrimer. The cofactor is FMN. Expressed in roots, shoots, leaves, flowers, developing siliques and seeds.

The enzyme catalyses N-[(R)-4-phosphopantothenoyl]-L-cysteine + H(+) = (R)-4'-phosphopantetheine + CO2. The protein operates within cofactor biosynthesis; coenzyme A biosynthesis; CoA from (R)-pantothenate: step 3/5. Involved in plant growth and salt and osmotic tolerance. Catalyzes the decarboxylation of 4'-phosphopantothenoylcysteine to 4'-phosphopantetheine, a key step in coenzyme A biosynthesis. The enzyme is also able to decarboxylate pantothenoylcysteine to pantothenoylcysteamine. This is Probable phosphopantothenoylcysteine decarboxylase (HAL3B) from Arabidopsis thaliana (Mouse-ear cress).